Reading from the N-terminus, the 384-residue chain is MIRIYTQLEQGEAWLRRYSDRLPLFTCILGFTETGLIPGISAAGRTPEDRKYTACADAEFLYYGAEHQPQYPLPPLTAGASPVLISRAVVEAFNMPVYLFNAGLPQSPAIPAIDLGGCPAKCLSTGAAMELTTVEHLFKQGLLWGERLAAEVPEGYVILSECVVGGTTTALAMLTGLGINAAGKVNSSHPVCNHEQKWQLVQQGLEAGKEAGGQGVGCRGDKSPIDPLKLVAAVGDPMQVVVAGMAIAASRGCGVMLAGGTQMLAVYALASAIAETYNLSWQPTAVVVATTRWVAEDSTGGTVELALNIGKNSQYPQIMTPPLLATKLSFANSQYPQLQAYEQGFVKEGVGAGAACIAANLYKNWQQHQLLQAIENQIQRLLDR.

This sequence belongs to the UPF0284 family.

The sequence is that of UPF0284 protein alr0297 from Nostoc sp. (strain PCC 7120 / SAG 25.82 / UTEX 2576).